We begin with the raw amino-acid sequence, 709 residues long: MLNFFAAAPKGFEYSLAQELTEFGATEVKESVAGVYFTASLALAYRITLWTRLASRIVLVIYKGSCESAEQLYNAAYCVDWPAHFSNKSTFSIDFHGTGGFLNNTQFGALKIKDAIVDRFRDDDIERPNVSRVDAEFKVDAHFRNGVITIAMNFSGPSLHQRGYRSTTGEAPLKENLAANMLVRSGWQAAPSTLLDPFCGSGTVLIEAALMAADIAPGLQRSRFGFEHWRRHDKAVWQEIVEEAKARASLGVKRCEIKFYGSDIDSRLVALAKRNAENAGVLELIEFKVADALTITPPAESGYLITNPPYGERLGNVSELLQLYYQLGDKFKKEFGGWKVAMLCSDIELVSSLKLKADKQMKMFNGALECAFNIYTLHANSTRRDTPVLPDGVDIADIAPAFANRIKKNAKLLEKWAKKEGIDSYRIYDADIPEYNVAVDKYLDYVIIQEYMAPATIPEAVTKRRLSDVLLALPSAIGINPNKMIMKTRERQKGTSQYQKLDERKLELITTEYGAKFKLNLTGYLDTGLFLDHRLTRRLVGQKSKGRRVLNLFSYTGSASVHAALGGAKSVTTVDMSNTYIAWAKDNFALNGLQGKQYEFVQSDCMQWIRDCNEQYDLIFIDPPTFSNSKRMEDSFDVQRDHVNLLSSLVKLLSPTGELVFSNNKRKFKMDIETLTKMNINVTNIDDVTLPMDYKRNPHIHNTWLITHA.

A THUMP domain is found at 43 to 154 (LAYRITLWTR…NGVITIAMNF (112 aa)).

The protein belongs to the methyltransferase superfamily. RlmKL family.

Its subcellular location is the cytoplasm. The enzyme catalyses guanosine(2445) in 23S rRNA + S-adenosyl-L-methionine = N(2)-methylguanosine(2445) in 23S rRNA + S-adenosyl-L-homocysteine + H(+). It catalyses the reaction guanosine(2069) in 23S rRNA + S-adenosyl-L-methionine = N(2)-methylguanosine(2069) in 23S rRNA + S-adenosyl-L-homocysteine + H(+). Specifically methylates the guanine in position 2445 (m2G2445) and the guanine in position 2069 (m7G2069) of 23S rRNA. The chain is Ribosomal RNA large subunit methyltransferase K/L from Shewanella baltica (strain OS185).